Consider the following 676-residue polypeptide: Protein cereblon (676 aa).

Residues 1–11 show a composition bias toward acidic residues; sequence MDDEETAEIDE. Disordered stretches follow at residues 1 to 78, 118 to 194, and 249 to 276; these read MDDE…TTAH, EDAG…AVPR, and DDAN…LDVD. Composition is skewed to low complexity over residues 12 to 33 and 125 to 139; these read TSSS…TETA and VPQN…TPPA. Over residues 156–177 the composition is skewed to polar residues; it reads LVNNDSPSQASISSRHSGSDMS. The Lon N-terminal domain occupies 314–542; sequence RMLIFMHQHI…IIGTTLKHES (229 aa). Residues 541 to 650 form the CULT domain; that stretch reads ESLFYCRYCN…LAGSSVRIGK (110 aa). 4 residues coordinate Zn(2+): Cys-546, Cys-549, Cys-615, and Cys-618.

This sequence belongs to the CRBN family. In terms of assembly, likely a component of a DCX (DDB1-CUL4-X-box) protein ligase complex. May interact with pic/DDB1. Ubiquitinated.

It is found in the nucleus. Its pathway is protein modification; protein ubiquitination. Its function is as follows. Substrate recognition component of a DCX (DDB1-CUL4-X-box) E3 protein ligase complex that mediates the ubiquitination and subsequent proteasomal degradation of target proteins. Has an essential role in mediating growth by negatively regulating insulin signaling. It also has a role in maintaining presynaptic function in the neuromuscular junction synapses of third-instar larvae. This chain is Protein cereblon, found in Drosophila mojavensis (Fruit fly).